A 143-amino-acid polypeptide reads, in one-letter code: Large ribosomal subunit protein uL15 (143 aa).

Positions 1–57 are disordered; the sequence is MQLNNLKPAAGSKHAKRRVGRGIGSGLGKTAGRGHKGQKSRSGGFHKVGFEGGQMPL. A compositionally biased stretch (gly residues) spans 21-31; that stretch reads RGIGSGLGKTA.

It belongs to the universal ribosomal protein uL15 family. Part of the 50S ribosomal subunit.

Binds to the 23S rRNA. In Ralstonia pickettii (strain 12J), this protein is Large ribosomal subunit protein uL15.